A 384-amino-acid polypeptide reads, in one-letter code: Lipid-A-disaccharide synthase 1 (384 aa).

This sequence belongs to the LpxB family.

The catalysed reaction is a lipid X + a UDP-2-N,3-O-bis[(3R)-3-hydroxyacyl]-alpha-D-glucosamine = a lipid A disaccharide + UDP + H(+). The protein operates within bacterial outer membrane biogenesis; LPS lipid A biosynthesis. Its function is as follows. Condensation of UDP-2,3-diacylglucosamine and 2,3-diacylglucosamine-1-phosphate to form lipid A disaccharide, a precursor of lipid A, a phosphorylated glycolipid that anchors the lipopolysaccharide to the outer membrane of the cell. The chain is Lipid-A-disaccharide synthase 1 from Legionella pneumophila (strain Lens).